A 474-amino-acid polypeptide reads, in one-letter code: Gamma-aminobutyric acid receptor subunit beta-1 (474 aa).

The first 25 residues, 1-25, serve as a signal peptide directing secretion; the sequence is MWTVQNRESLGLLSFPVMIAMVCCA. At 26-245 the chain is on the extracellular side; that stretch reads HSANEPSNMS…SFRLKRNIGY (220 aa). 2 N-linked (GlcNAc...) asparagine glycosylation sites follow: asparagine 33 and asparagine 105. A histamine-binding site is contributed by tyrosine 122. Cysteine 161 and cysteine 175 form a disulfide bridge. A glycan (N-linked (GlcNAc...) asparagine) is linked at asparagine 174. Histamine-binding positions include 181 to 182 and threonine 227; that span reads SY. 4-aminobutanoate contacts are provided by tyrosine 182 and threonine 227. The next 3 helical transmembrane spans lie at 246 to 267, 271 to 293, and 305 to 327; these read FILQTYMPSTLITILSWVSFWI, ASAARVALGITTVLTMTTISTHL, and AIDIYLMGCFVFVFLALLEYAFV. Topologically, residues 328–451 are cytoplasmic; that stretch reads NYIFFGKGPQ…DLTDVNSIDK (124 aa). The chain crosses the membrane as a helical span at residues 452–473; that stretch reads WSRMFFPITFSLFNVVYWLYYV.

Belongs to the ligand-gated ion channel (TC 1.A.9) family. Gamma-aminobutyric acid receptor (TC 1.A.9.5) subfamily. GABRB1 sub-subfamily. As to quaternary structure, heteropentamer, formed by a combination of alpha (GABRA1-6), beta (GABRB1-3), gamma (GABRG1-3), delta (GABRD), epsilon (GABRE), rho (GABRR1-3), pi (GABRP) and theta (GABRQ) chains, each subunit exhibiting distinct physiological and pharmacological properties. Binds UBQLN1.

The protein localises to the postsynaptic cell membrane. It localises to the cell membrane. It carries out the reaction chloride(in) = chloride(out). Potentiated by histamine. Its function is as follows. Beta subunit of the heteropentameric ligand-gated chloride channel gated by gamma-aminobutyric acid (GABA), a major inhibitory neurotransmitter in the brain. GABA-gated chloride channels, also named GABA(A) receptors (GABAAR), consist of five subunits arranged around a central pore and contain GABA active binding site(s) located at the alpha and beta subunit interface(s). When activated by GABA, GABAARs selectively allow the flow of chloride anions across the cell membrane down their electrochemical gradient. Chloride influx into the postsynaptic neuron following GABAAR opening decreases the neuron ability to generate a new action potential, thereby reducing nerve transmission. Beta-containing GABAARs can simultaneously bind GABA and histamine where histamine binds at the interface of two neighboring beta subunits, which may be involved in the regulation of sleep and wakefulness. The polypeptide is Gamma-aminobutyric acid receptor subunit beta-1 (GABRB1) (Bos taurus (Bovine)).